A 696-amino-acid polypeptide reads, in one-letter code: Solute carrier family 53 member 1 (696 aa).

The Cytoplasmic segment spans residues 1–228 (MKFAEHLSAH…RVPPLGAAQP (228 aa)). The 223-residue stretch at 2 to 224 (KFAEHLSAHI…MKRLRVPPLG (223 aa)) folds into the SPX domain. Positions 158-165 (KILKKHDK) are important for inositol polyphosphate binding. A helical transmembrane segment spans residues 229 to 259 (APAWTTFRVGLFCGIFIVLNITLVLAAVFKL). Residues 260–264 (ETDRS) are Extracellular-facing. A helical membrane pass occupies residues 265–296 (IWPLIRIYRGGFLLIEFLFLLGINTYGWRQAG). The Cytoplasmic portion of the chain corresponds to 297-309 (VNHVLIFELNPRS). The helical transmembrane segment at 310-337 (NLSHQHLFEIAGFLGILWCLSLLACFFA) threads the bilayer. Residues 338–343 (PISVIP) lie on the Extracellular side of the membrane. A helical transmembrane segment spans residues 344-365 (TYVYPLALYGFMVFFLINPTKT). Positions 366-383 (FYYKSRFWLLKLLFRVFT) form an intramembrane region, helical. Topologically, residues 384-388 (APFHK) are cytoplasmic. Residues 389 to 422 (VGFADFWLADQLNSLSVILMDLEYMICFYSLELK) form a discontinuously helical membrane-spanning segment. 2 residues coordinate phosphate: Asp-398 and Asn-401. Topologically, residues 423–429 (WDESKGL) are extracellular. Residues 430–471 (LPNNSEESGICHKYTYGVRAIVQCIPAWLRFIQCLRRYRDTK) form a discontinuously helical membrane-spanning segment. Positions 439–643 (ICHKYTYGVR…LNADDQTLLE (205 aa)) constitute an EXS domain. A topological domain (cytoplasmic) is located at residue Arg-472. Residues 473-503 (AFPHLVNAGKYSTTFFMVTFAALYSTHKERG) traverse the membrane as a helical segment. The phosphate site is built by Lys-482 and Tyr-483. At 504 to 506 (HSD) the chain is on the extracellular side. A helical transmembrane segment spans residues 507–534 (TMVFFYLWIVFYIISSCYTLIWDLKMDW). Over 535–553 (GLFDKNAGENTFLREEIVY) the chain is Cytoplasmic. The discontinuously helical transmembrane segment at 554–585 (PQKAYYYCAIIEDVILRFAWTIQISITSTTLL) threads the bilayer. Phosphate is bound at residue Arg-570. At 586–587 (PH) the chain is on the extracellular side. A helical transmembrane segment spans residues 588–626 (SGDIIATVFAPLEVFRRFVWNFFRLENEHLNNCGEFRAV). Phosphate contacts are provided by Arg-603 and Arg-604. The Cytoplasmic segment spans residues 627 to 696 (RDISVAPLNA…IEDTDDEANT (70 aa)). Ser-668 carries the phosphoserine modification. Residues 673-696 (RLASQSKARDTKVLIEDTDDEANT) are disordered. At Thr-690 the chain carries Phosphothreonine.

This sequence belongs to the SYG1 (TC 2.A.94) family. As to quaternary structure, homodimer. In terms of tissue distribution, widely expressed. Detected in spleen, lymph node, thymus, leukocytes, bone marrow, heart, kidney, pancreas and skeletal muscle.

The protein resides in the cell membrane. It catalyses the reaction phosphate(in) = phosphate(out). Allosterically activated by inositol hexakisphosphate (Ins6P). In terms of biological role, inorganic ion transporter that mediates phosphate ion export across plasma membrane. Plays a major role in phosphate homeostasis, preventing intracellular phosphate accumulation and possible calcium phosphate precipitation, ultimately preserving calcium signaling. Binds inositol hexakisphosphate (Ins6P) and similar inositol polyphosphates, such as 5-diphospho-inositol pentakisphosphate (5-InsP7), which are important intracellular signaling molecules involved in regulation of phosphate flux. This Homo sapiens (Human) protein is Solute carrier family 53 member 1.